A 387-amino-acid chain; its full sequence is 17-beta-hydroxysteroid dehydrogenase type 2 (387 aa).

Residues 4 to 24 (FFSDTAWICLAVPTVLCGTVF) form a helical; Signal-anchor for type II membrane protein membrane-spanning segment. Position 82 to 111 (82 to 111 (QKAVLVTGGDCGLGHALCKYLDELGFTVFA)) interacts with NAD(+). S219 lines the substrate pocket. Y232 is an active-site residue.

It belongs to the short-chain dehydrogenases/reductases (SDR) family. As to quaternary structure, homodimer. As to expression, expressed in placenta.

The protein resides in the endoplasmic reticulum membrane. The catalysed reaction is 17beta-estradiol + NAD(+) = estrone + NADH + H(+). It catalyses the reaction testosterone + NAD(+) = androst-4-ene-3,17-dione + NADH + H(+). The enzyme catalyses 17beta-hydroxy-5alpha-androstan-3-one + NAD(+) = 5alpha-androstan-3,17-dione + NADH + H(+). It carries out the reaction (20S)-hydroxypregn-4-en-3-one + NAD(+) = progesterone + NADH + H(+). Its function is as follows. Catalyzes the NAD-dependent oxidation of the highly active 17beta-hydroxysteroids, such as estradiol (E2), testosterone (T), and dihydrotestosterone (DHT), to their less active forms and thus regulates the biological potency of these steroids. Oxidizes estradiol to estrone, testosterone to androstenedione, and dihydrotestosterone to 5alpha-androstan-3,17-dione. Also has 20-alpha-HSD activity. In Homo sapiens (Human), this protein is 17-beta-hydroxysteroid dehydrogenase type 2.